The following is a 527-amino-acid chain: Flavonoid 3',5'-hydroxylase CYP75B138 (527 aa).

A helical membrane pass occupies residues 6–26 (LDIILFISAIVFLSIYYYNLF). Cys459 contacts heme.

It belongs to the cytochrome P450 family. It depends on heme as a cofactor. Expressed in young cromes.

The protein localises to the membrane. The enzyme catalyses a 3',5'-unsubstituted flavanone + 2 reduced [NADPH--hemoprotein reductase] + 2 O2 = a 3',5'-dihydroxyflavanone + 2 oxidized [NADPH--hemoprotein reductase] + 2 H2O + 2 H(+). It catalyses the reaction (2S)-naringenin + 2 reduced [NADPH--hemoprotein reductase] + 2 O2 = (2S)-dihydrotricetin + 2 oxidized [NADPH--hemoprotein reductase] + 2 H2O + 2 H(+). It carries out the reaction (2R,3R)-dihydrokaempferol + 2 reduced [NADPH--hemoprotein reductase] + 2 O2 = (2R,3R)-dihydromyricetin + 2 oxidized [NADPH--hemoprotein reductase] + 2 H2O + 2 H(+). The catalysed reaction is kaempferol + 2 reduced [NADPH--hemoprotein reductase] + 2 O2 = myricetin + 2 oxidized [NADPH--hemoprotein reductase] + 2 H2O + 2 H(+). Its pathway is flavonoid metabolism. Flavonoid 3',5'-hydroxylase that catalyzes the 3'- and 5'-hydroxylation of flavanones, dihydroflavonols and flavonols. Converts narigenin to dihydrotricetin, dihydrokaempferol to dihydromyricetin and kaempferol to myricetin. This is Flavonoid 3',5'-hydroxylase CYP75B138 from Crocosmia x crocosmiiflora (Montbretia).